A 132-amino-acid polypeptide reads, in one-letter code: Small ribosomal subunit protein uS8 (132 aa).

Belongs to the universal ribosomal protein uS8 family. In terms of assembly, part of the 30S ribosomal subunit. Contacts proteins S5 and S12.

One of the primary rRNA binding proteins, it binds directly to 16S rRNA central domain where it helps coordinate assembly of the platform of the 30S subunit. This Geobacter metallireducens (strain ATCC 53774 / DSM 7210 / GS-15) protein is Small ribosomal subunit protein uS8.